Consider the following 226-residue polypeptide: ATP synthase subunit a (226 aa).

Transmembrane regions (helical) follow at residues 18-38 (LSLN…SYWL), 74-94 (FISL…PYIF), 100-120 (LTLT…YGWI), 158-180 (LAVR…GNTG), and 197-217 (IALL…FAVL).

It belongs to the ATPase A chain family. F-type ATPases have 2 components, CF(1) - the catalytic core - and CF(0) - the membrane proton channel. CF(1) has five subunits: alpha(3), beta(3), gamma(1), delta(1), epsilon(1). CF(0) has three main subunits: a, b and c.

It localises to the mitochondrion inner membrane. Mitochondrial membrane ATP synthase (F(1)F(0) ATP synthase or Complex V) produces ATP from ADP in the presence of a proton gradient across the membrane which is generated by electron transport complexes of the respiratory chain. F-type ATPases consist of two structural domains, F(1) - containing the extramembraneous catalytic core and F(0) - containing the membrane proton channel, linked together by a central stalk and a peripheral stalk. During catalysis, ATP synthesis in the catalytic domain of F(1) is coupled via a rotary mechanism of the central stalk subunits to proton translocation. Key component of the proton channel; it may play a direct role in the translocation of protons across the membrane. This Anopheles gambiae (African malaria mosquito) protein is ATP synthase subunit a (mt:ATPase6).